Here is a 148-residue protein sequence, read N- to C-terminus: Large ribosomal subunit protein bL9 (148 aa).

This sequence belongs to the bacterial ribosomal protein bL9 family.

Its function is as follows. Binds to the 23S rRNA. The protein is Large ribosomal subunit protein bL9 of Heliobacterium modesticaldum (strain ATCC 51547 / Ice1).